Reading from the N-terminus, the 86-residue chain is Small ribosomal subunit protein bS18 (86 aa).

Belongs to the bacterial ribosomal protein bS18 family. As to quaternary structure, part of the 30S ribosomal subunit. Forms a tight heterodimer with protein bS6.

Its function is as follows. Binds as a heterodimer with protein bS6 to the central domain of the 16S rRNA, where it helps stabilize the platform of the 30S subunit. This chain is Small ribosomal subunit protein bS18, found in Protochlamydia amoebophila (strain UWE25).